The chain runs to 836 residues: uncharacterized protein (836 aa).

Disordered regions lie at residues 1–25 (MDST…NEEE), 692–718 (DSRS…NNQR), and 789–836 (ESSG…GYAS). Composition is skewed to polar residues over residues 789 to 799 (ESSGINVSNTR) and 825 to 836 (IDSSSAQNGYAS).

Its subcellular location is the nucleus. This is an uncharacterized protein from Schizosaccharomyces pombe (strain 972 / ATCC 24843) (Fission yeast).